Reading from the N-terminus, the 128-residue chain is Ribonuclease P protein component (128 aa).

It belongs to the RnpA family. In terms of assembly, consists of a catalytic RNA component (M1 or rnpB) and a protein subunit.

It catalyses the reaction Endonucleolytic cleavage of RNA, removing 5'-extranucleotides from tRNA precursor.. RNaseP catalyzes the removal of the 5'-leader sequence from pre-tRNA to produce the mature 5'-terminus. It can also cleave other RNA substrates such as 4.5S RNA. The protein component plays an auxiliary but essential role in vivo by binding to the 5'-leader sequence and broadening the substrate specificity of the ribozyme. This chain is Ribonuclease P protein component, found in Prochlorococcus marinus (strain MIT 9301).